The following is a 246-amino-acid chain: Adenosylcobinamide-GDP ribazoletransferase (246 aa).

7 consecutive transmembrane segments (helical) span residues 30–50 (VNWY…VHQA), 51–71 (GLVL…WVYV), 105–125 (VGAM…GAVA), 131–151 (GWGS…LLSI), 167–189 (ISSG…AGWY), 193–210 (LQVM…LWFS), and 226–246 (GAVI…SWWL).

It belongs to the CobS family. It depends on Mg(2+) as a cofactor.

It is found in the cell membrane. It carries out the reaction alpha-ribazole + adenosylcob(III)inamide-GDP = adenosylcob(III)alamin + GMP + H(+). The enzyme catalyses alpha-ribazole 5'-phosphate + adenosylcob(III)inamide-GDP = adenosylcob(III)alamin 5'-phosphate + GMP + H(+). It participates in cofactor biosynthesis; adenosylcobalamin biosynthesis; adenosylcobalamin from cob(II)yrinate a,c-diamide: step 7/7. Joins adenosylcobinamide-GDP and alpha-ribazole to generate adenosylcobalamin (Ado-cobalamin). Also synthesizes adenosylcobalamin 5'-phosphate from adenosylcobinamide-GDP and alpha-ribazole 5'-phosphate. The protein is Adenosylcobinamide-GDP ribazoletransferase of Brevibacillus brevis (strain 47 / JCM 6285 / NBRC 100599).